The sequence spans 259 residues: Virion protein US10 homolog (259 aa).

Residues 162-174 (CAHWCCLGHAFGC) fold into a zinc finger.

The protein belongs to the herpesviridae US10 family. Post-translationally, phosphorylated.

Its subcellular location is the virion tegument. It localises to the host nucleus matrix. The sequence is that of Virion protein US10 homolog from Equine herpesvirus 4 (strain 1942) (EHV-4).